The chain runs to 496 residues: Zinc finger and SCAN domain-containing protein 5C (496 aa).

Residues 1–19 (MAANCTSSWSLGESCNSPG) are compositionally biased toward polar residues. The segment at 1 to 38 (MAANCTSSWSLGESCNSPGSEPPQSMPSPATQLGNHDS) is disordered. The 83-residue stretch at 44–126 (HVNFRMFSCP…DLLRNNRRPK (83 aa)) folds into the SCAN box domain. 2 disordered regions span residues 149-188 (EAPA…TLPR) and 203-347 (PETT…HPSG). Over residues 161–171 (VSSQRTSSVNQ) the composition is skewed to polar residues. Basic and acidic residues predominate over residues 210–223 (GDPKALRPKPTLEK). Over residues 234 to 247 (GLTSPEPQLPNSPT) the composition is skewed to polar residues. Residues 253–263 (KEGKEPQKRAS) are compositionally biased toward basic and acidic residues. 5 consecutive C2H2-type zinc fingers follow at residues 356–378 (FACE…TRSH), 384–406 (FQCN…QRTH), 412–434 (YTCD…KRSH), 440–462 (FECK…QRIH), and 468–490 (HKCS…QKTH).

The protein localises to the nucleus. May be involved in transcriptional regulation. The protein is Zinc finger and SCAN domain-containing protein 5C of Homo sapiens (Human).